The primary structure comprises 647 residues: Nucleoside triphosphatase I (647 aa).

The region spanning 48-212 (FIGLKNLNSM…NNLIGLLRPN (165 aa)) is the Helicase ATP-binding domain. An ATP-binding site is contributed by 61–68 (WDTGTGKT). Residues 150–153 (DEVH) carry the DEXH box motif. The 164-residue stretch at 378–541 (YIEACRIILN…KINVVFDLLK (164 aa)) folds into the Helicase C-terminal domain. The binding to the cap-specific mRNA (nucleoside-2'-O-)-methyltransferase stretch occupies residues 467-533 (DIIILDMPWN…DIIKNKQGKI (67 aa)).

Belongs to the helicase family. NPH I subfamily. Monomer. Interacts (via C-terminus) with RAP94 (via N-terminus). Interacts with the cap-specific mRNA (nucleoside-2'-O-)-methyltransferase.

The protein localises to the virion. The enzyme catalyses a ribonucleoside 5'-triphosphate + H2O = a ribonucleoside 5'-diphosphate + phosphate + H(+). DNA-dependent ATPase required for providing the needed energy to achieve the termination of early transcripts. Acts in concert with the RAP94 subunit of the virion RNA polymerase and the capping enzyme/VTF to catalyze release of UUUUUNU-containing nascent RNA from the elongation complex. NPH-I must bind ssDNA in order to exhibit ATPase activity. This is Nucleoside triphosphatase I (NPH1) from Choristoneura fumiferana (Spruce budworm moth).